Here is a 128-residue protein sequence, read N- to C-terminus: Probable 4-amino-4-deoxy-L-arabinose-phosphoundecaprenol flippase subunit ArnF (128 aa).

Topologically, residues 1 to 2 are cytoplasmic; that stretch reads MG. Residues 3–23 form a helical membrane-spanning segment; it reads LMWGLFSVIIASVAQLSLGFA. The Periplasmic portion of the chain corresponds to 24-35; sequence ASHLPPMTHLWD. The chain crosses the membrane as a helical span at residues 36–56; it reads FIAALLAFGLDARILLLGLLG. The Cytoplasmic portion of the chain corresponds to 57–76; that stretch reads YLLSVFCWYKTLHKLALSKA. The helical transmembrane segment at 77 to 97 threads the bilayer; sequence YALLSMSYVLVWIASMVLPGW. At 98–100 the chain is on the periplasmic side; it reads EGT. A helical membrane pass occupies residues 101 to 121; the sequence is FSLKALLGVACIMSGLMLIFL. The Cytoplasmic portion of the chain corresponds to 122–128; sequence PMTKQRY.

The protein belongs to the ArnF family. Heterodimer of ArnE and ArnF.

The protein localises to the cell inner membrane. The protein operates within bacterial outer membrane biogenesis; lipopolysaccharide biosynthesis. Translocates 4-amino-4-deoxy-L-arabinose-phosphoundecaprenol (alpha-L-Ara4N-phosphoundecaprenol) from the cytoplasmic to the periplasmic side of the inner membrane. This is Probable 4-amino-4-deoxy-L-arabinose-phosphoundecaprenol flippase subunit ArnF from Escherichia coli (strain 55989 / EAEC).